The primary structure comprises 746 residues: Protein Niban 2 (746 aa).

The N-myristoyl glycine moiety is linked to residue G2. One can recognise a PH domain in the interval R68–R192. 4 positions are modified to phosphoserine: S568, S574, S601, and S603. The segment at G590 to F746 is disordered. T606 is modified (phosphothreonine). 9 positions are modified to phosphoserine: S609, S624, S638, S641, S646, S665, S681, S692, and S696. Low complexity predominate over residues P671–P693. Over residues G720–F746 the composition is skewed to polar residues.

It belongs to the Niban family. Post-translationally, phosphorylated at Ser-641, Ser-646, Ser-692 and Ser-696 by the BRAF/MKK/ERK signaling cascade. In melanoma cells, the C-terminal phosphorylation may prevent targeting to the plasma membrane. In terms of processing, as apoptosis proceeds, degraded via an proteasome-independent pathway, probably by caspases.

The protein resides in the cytoplasm. The protein localises to the cytosol. It is found in the cell junction. Its subcellular location is the adherens junction. It localises to the membrane. Functionally, may play a role in apoptosis suppression. May promote melanoma cell invasion in vitro. In Homo sapiens (Human), this protein is Protein Niban 2.